The primary structure comprises 213 residues: Immunoglobulin lambda-like polypeptide 1 (213 aa).

The first 37 residues, 1–37 (MRPGTGQGGLEAPGEPGPNLRQRWPLLLLGLAVVTHG), serve as a signal peptide directing secretion. Positions 97 to 108 (VFGSGTQLTVLS) are j region. The interval 109–213 (QPKATPSVTL…EKTVAPAECS (105 aa)) is c region. The region spanning 114–208 (PSVTLFPPSS…EGSTVEKTVA (95 aa)) is the Ig-like C1-type domain. A disulfide bond links C135 and C194.

In terms of assembly, associates non-covalently with VPREB1. Interacts with SYNV1/HRD1 (via N-terminus); this interaction leads to increased IGLL1 ubiquitination and degradation in pre-B cells, possibly through a lysosomal, not proteasomal, pathway. Expressed only in pre-B-cells and a special B-cell line (which is surface Ig negative).

It localises to the endoplasmic reticulum. The protein localises to the secreted. Functionally, critical for B-cell development. The protein is Immunoglobulin lambda-like polypeptide 1 (IGLL1) of Homo sapiens (Human).